The primary structure comprises 318 residues: Methionyl-tRNA formyltransferase (318 aa).

115-118 serves as a coordination point for (6S)-5,6,7,8-tetrahydrofolate; it reads SLLP.

The protein belongs to the Fmt family.

It catalyses the reaction L-methionyl-tRNA(fMet) + (6R)-10-formyltetrahydrofolate = N-formyl-L-methionyl-tRNA(fMet) + (6S)-5,6,7,8-tetrahydrofolate + H(+). Its function is as follows. Attaches a formyl group to the free amino group of methionyl-tRNA(fMet). The formyl group appears to play a dual role in the initiator identity of N-formylmethionyl-tRNA by promoting its recognition by IF2 and preventing the misappropriation of this tRNA by the elongation apparatus. In Deinococcus radiodurans (strain ATCC 13939 / DSM 20539 / JCM 16871 / CCUG 27074 / LMG 4051 / NBRC 15346 / NCIMB 9279 / VKM B-1422 / R1), this protein is Methionyl-tRNA formyltransferase.